A 294-amino-acid chain; its full sequence is Nucleotide-binding protein Dde_1774 (294 aa).

14–21 (GLSGAGKS) lines the ATP pocket. 66-69 (DLRQ) contacts GTP.

It belongs to the RapZ-like family.

In terms of biological role, displays ATPase and GTPase activities. This chain is Nucleotide-binding protein Dde_1774, found in Oleidesulfovibrio alaskensis (strain ATCC BAA-1058 / DSM 17464 / G20) (Desulfovibrio alaskensis).